A 93-amino-acid chain; its full sequence is YcgL domain-containing protein VIBHAR_01387 (93 aa).

Residues Met-1–Lys-84 form the YcgL domain.

The sequence is that of YcgL domain-containing protein VIBHAR_01387 from Vibrio campbellii (strain ATCC BAA-1116).